Consider the following 432-residue polypeptide: Glutamyl-tRNA reductase (432 aa).

Substrate is bound by residues 49-52 (TCNR), Ser109, 114-116 (EGQ), and Gln120. Catalysis depends on Cys50, which acts as the Nucleophile. Residue 198–203 (GAGRMS) coordinates NADP(+).

This sequence belongs to the glutamyl-tRNA reductase family. As to quaternary structure, homodimer.

It catalyses the reaction (S)-4-amino-5-oxopentanoate + tRNA(Glu) + NADP(+) = L-glutamyl-tRNA(Glu) + NADPH + H(+). It functions in the pathway porphyrin-containing compound metabolism; protoporphyrin-IX biosynthesis; 5-aminolevulinate from L-glutamyl-tRNA(Glu): step 1/2. The protein operates within porphyrin-containing compound metabolism; chlorophyll biosynthesis. Its function is as follows. Catalyzes the NADPH-dependent reduction of glutamyl-tRNA(Glu) to glutamate 1-semialdehyde (GSA). The sequence is that of Glutamyl-tRNA reductase from Parasynechococcus marenigrum (strain WH8102).